Consider the following 78-residue polypeptide: Large ribosomal subunit protein bL28 (78 aa).

This sequence belongs to the bacterial ribosomal protein bL28 family.

This chain is Large ribosomal subunit protein bL28, found in Synechococcus sp. (strain WH7803).